The following is a 257-amino-acid chain: 5'-nucleotidase SurE (257 aa).

Residues aspartate 8, aspartate 9, serine 40, and asparagine 95 each contribute to the a divalent metal cation site.

This sequence belongs to the SurE nucleotidase family. A divalent metal cation is required as a cofactor.

Its subcellular location is the cytoplasm. It catalyses the reaction a ribonucleoside 5'-phosphate + H2O = a ribonucleoside + phosphate. Nucleotidase that shows phosphatase activity on nucleoside 5'-monophosphates. The chain is 5'-nucleotidase SurE from Desulfovibrio desulfuricans (strain ATCC 27774 / DSM 6949 / MB).